The chain runs to 323 residues: Serine/threonine-protein phosphatase PP1-gamma catalytic subunit (323 aa).

An N-acetylalanine modification is found at alanine 2. Mn(2+) is bound by residues aspartate 64, histidine 66, aspartate 92, and asparagine 124. The active-site Proton donor is histidine 125. 2 residues coordinate Mn(2+): histidine 173 and histidine 248. A disordered region spans residues 302 to 323 (KKPNATRPVTPPRGMITKQAKK). 2 positions are modified to phosphothreonine: threonine 307 and threonine 311.

This sequence belongs to the PPP phosphatase family. PP-1 subfamily. In terms of assembly, PP1 comprises a catalytic subunit, PPP1CA, PPP1CB or PPP1CC, which is folded into its native form by inhibitor 2 and glycogen synthetase kinase 3, and then complexed to one or several targeting or regulatory subunits. PPP1R12A, PPP1R12B and PPP1R12C mediate binding to myosin. PPP1R3A (in skeletal muscle), PPP1R3B (in liver), PPP1R3C, PPP1R3D and PPP1R3F (in brain) mediate binding to glycogen. Interacts with cyanobacterial toxin microcystin; disulfide-linked. Interacts with PPP1R3B and PPP1R7. Isoform 2 interacts with SPZ1. Interacts with CDCA2. PPP1R15A and PPP1R15B mediate binding to EIF2S1. Part of a complex containing PPP1R15B, PP1 and NCK1/2. Interacts with IKFZ1; the interaction targets PPP1CC to pericentromeric heterochromatin, dephosphorylates IKAROS, stabilizes it and prevents it from degradation. Interacts with PPP1R42; the interaction is direct. Interacts with NOM1 and PPP1R8. Component of the PTW/PP1 phosphatase complex, composed of PPP1R10/PNUTS, TOX4, WDR82, and PPP1CA or PPP1CB or PPP1CC. Interacts with PPP1R8. Interacts with isoform 1 and isoform 4 NEK2. Interacts with URI1; the interaction is phosphorylation-dependent and occurs in a growth factor-dependent manner. Interacts with FOXP3. Interacts with TMEM225 (via RVxF motif). Interacts with MKI67. Interacts with RRP1B; this targets PPP1CC to the nucleolus. Interacts with PPP1R2B. Found in a complex with PPP1CA, PPP1CC, SHC1 and PEAK1. Interacts with DYNLT4. Interacts (via RVxF motif) with FIRRM; regulates PLK1 kinase activity. Interacts with the KNL1 complex subunit KNL1; the interaction is direct and mutually exclusive with KNL1 binding to microtubules. Component of the SHOC2-MRAS-PP1c (SMP) complex consisting of SHOC2, GTP-bound M-Ras/MRAS and the catalytic subunit of protein phosphatase 1 (either PPP1CA, PPP1CB or PPP1CC). SHOC2 and PP1c preferably bind M-Ras/MRAS, but they also bind K-Ras/KRAS, N-Ras/NRAS and H-Ras/HRAS; these interactions are GTP-dependent and both SHOC2 and PP1c are required to form a stable complex. Interacts with SHOC2 in the absence of Ras GTPases. Requires Mn(2+) as cofactor. In terms of processing, phosphorylated by NEK2.

It is found in the cytoplasm. Its subcellular location is the nucleus. It localises to the nucleolus. The protein localises to the nucleoplasm. The protein resides in the nucleus speckle. It is found in the chromosome. Its subcellular location is the centromere. It localises to the kinetochore. The protein localises to the cleavage furrow. The protein resides in the midbody. It is found in the mitochondrion. Its subcellular location is the cytoskeleton. It localises to the microtubule organizing center. It carries out the reaction O-phospho-L-seryl-[protein] + H2O = L-seryl-[protein] + phosphate. The enzyme catalyses O-phospho-L-threonyl-[protein] + H2O = L-threonyl-[protein] + phosphate. With respect to regulation, inactivated by binding to URI1. The phosphatase activity of the PPP1R15A-PP1 complex toward EIF2S1 is specifically inhibited by Salubrinal, a drug that protects cells from endoplasmic reticulum stress. Functionally, protein phosphatase that associates with over 200 regulatory proteins to form highly specific holoenzymes which dephosphorylate hundreds of biological targets. Protein phosphatase 1 (PP1) is essential for cell division, and participates in the regulation of glycogen metabolism, muscle contractility and protein synthesis. Dephosphorylates RPS6KB1. Involved in regulation of ionic conductances and long-term synaptic plasticity. May play an important role in dephosphorylating substrates such as the postsynaptic density-associated Ca(2+)/calmodulin dependent protein kinase II. Component of the PTW/PP1 phosphatase complex, which plays a role in the control of chromatin structure and cell cycle progression during the transition from mitosis into interphase. In balance with CSNK1D and CSNK1E, determines the circadian period length, through the regulation of the speed and rhythmicity of PER1 and PER2 phosphorylation. May dephosphorylate CSNK1D and CSNK1E. Regulates the recruitment of the SKA complex to kinetochores. Dephosphorylates the 'Ser-418' residue of FOXP3 in regulatory T-cells (Treg) from patients with rheumatoid arthritis, thereby inactivating FOXP3 and rendering Treg cells functionally defective. Together with PPP1CA (PP1-alpha subunit), dephosphorylates IFIH1/MDA5 and RIG-I leading to their activation and a functional innate immune response. Core component of the SHOC2-MRAS-PP1c (SMP) holophosphatase complex that regulates the MAPK pathway activation. The SMP complex specifically dephosphorylates the inhibitory phosphorylation at 'Ser-259' of RAF1 kinase, 'Ser-365' of BRAF kinase and 'Ser-214' of ARAF kinase, stimulating their kinase activities. Dephosphorylates MKI67 at the onset of anaphase. The SMP complex enhances the dephosphorylation activity and substrate specificity of PP1c. This chain is Serine/threonine-protein phosphatase PP1-gamma catalytic subunit (PPP1CC), found in Homo sapiens (Human).